A 282-amino-acid chain; its full sequence is Bacterial lipoprotein FTN_1103 (282 aa).

Residues 1-28 form the signal peptide; the sequence is MKYGNLMMTKKKLLIGMVTISGIVILGS. Cys29 carries N-palmitoyl cysteine lipidation. Cys29 is lipidated: S-diacylglycerol cysteine.

It is found in the cell membrane. In terms of biological role, stimulates the host immune inflammatory signaling system allowing the host to combat the bacteria. Stimulates mouse interleukin-6 (Il6) production. The chain is Bacterial lipoprotein FTN_1103 from Francisella tularensis subsp. novicida (strain U112).